The primary structure comprises 201 residues: uncharacterized protein (201 aa).

This is an uncharacterized protein from Haemophilus influenzae (strain ATCC 51907 / DSM 11121 / KW20 / Rd).